The sequence spans 617 residues: Vacuolar protein sorting-associated protein 33A (617 aa).

Residues 268–287 (NFPSDGALPGGGGSGPRVEE) are disordered.

Belongs to the STXBP/unc-18/SEC1 family. As to quaternary structure, component of the class C core vacuole/endosome tethering (CORVET) complex composed of at least Vps8, dor/Vps18, car/Vps33A and Vps16A; unlike in other species, Vps11 is not part of the Drosophila complex. Due to the reduced number of components the Drosophila CORVET complex is often referred to as the miniCORVET complex. Interacts with ema. Component of the homotypic fusion and vacuole protein sorting (HOPS) complex, composed of Vps16A, car/Vps33A, dor/Vps18, Vps39, Vps11 and lt/Vps41. The tethering complex core made up of Vps16A, car/Vps33A and dor/Vps18 and shared by both HOPS and CORVET, preferentially associates with CORVET specific Vps8 over HOPS specific lt/Vps41. Interacts with Syx17 (via SNARE domain); the interaction requires Vps16A, may involve additional components of the HOPS complex and may promote assembly of the Syx17-Snap29-Vamp7 trans-SNARE complex.

Its subcellular location is the early endosome. The protein localises to the late endosome membrane. It localises to the lysosome membrane. Its function is as follows. Core component of the class C core vacuole/endosome tethering (CORVET) and the homotypic fusion and vacuole protein sorting (HOPS) tethering complexes involved in endo-lysosomal vesicle trafficking and lysosome biogenesis. The CORVET complex facilitates docking and fusion of endosomal vesicles during endosome maturation, acts upstream of HOPS, but is not involved in autophagic flux. The CORVET complex may cooperate with the early endosomal tether Rbsn-5 to mediate endosomal fusion. The HOPS complex facilitates docking and fusion of lysosomes with late endosomes and several other types of vesicles. The HOPS complex is also involved in autophagy and crinophagy (the elimination of unused secretory granules through their fusion with lysosomes). The HOPS complex probably instigates autophagosome-lysosome fusion by binding autophagosome associated Syx17/syntaxin 17 and promoting assembly of the trans-SNARE complex. Independent of Syx17/syntaxin 17 HOPS is involved in biosynthetic transport to lysosomes and lysosome-related organelles such as eye-pigment granules. Required for endocytic degradation of boss/bride of sevenless and N/Notch in developing ommatidia. In Drosophila melanogaster (Fruit fly), this protein is Vacuolar protein sorting-associated protein 33A.